The chain runs to 114 residues: Ribosome-binding factor A (114 aa).

This sequence belongs to the RbfA family. As to quaternary structure, monomer. Binds 30S ribosomal subunits, but not 50S ribosomal subunits or 70S ribosomes.

It localises to the cytoplasm. In terms of biological role, one of several proteins that assist in the late maturation steps of the functional core of the 30S ribosomal subunit. Associates with free 30S ribosomal subunits (but not with 30S subunits that are part of 70S ribosomes or polysomes). Required for efficient processing of 16S rRNA. May interact with the 5'-terminal helix region of 16S rRNA. This Listeria welshimeri serovar 6b (strain ATCC 35897 / DSM 20650 / CCUG 15529 / CIP 8149 / NCTC 11857 / SLCC 5334 / V8) protein is Ribosome-binding factor A.